Reading from the N-terminus, the 275-residue chain is Undecaprenyl-diphosphatase (275 aa).

The next 7 helical transmembrane spans lie at Trp-8–Ile-28, Ala-45–Ile-65, Phe-92–Phe-112, Phe-119–Ile-139, Phe-197–Ile-217, Glu-225–Leu-245, and Gly-255–Leu-275.

The protein belongs to the UppP family.

It is found in the cell membrane. It carries out the reaction di-trans,octa-cis-undecaprenyl diphosphate + H2O = di-trans,octa-cis-undecaprenyl phosphate + phosphate + H(+). Its function is as follows. Catalyzes the dephosphorylation of undecaprenyl diphosphate (UPP). Confers resistance to bacitracin. This is Undecaprenyl-diphosphatase from Oceanobacillus iheyensis (strain DSM 14371 / CIP 107618 / JCM 11309 / KCTC 3954 / HTE831).